Here is a 183-residue protein sequence, read N- to C-terminus: MSRKARDPIVLPQGVEVSIQNDEISVKGPKGSLTQVLAKEVEIAVKGNEVFVAPAAHVVDRPGRMQGLYWALIANMVKGVHTGFEKRLEMIGVGFRAAVQGSLLDLSIGVSHPTKMPIPTGLEVSVEKNTLISIKGINKQLVGEFAACVRAKRPPEPYKGKGIRYENEYVRRKAGKAAKTGKK.

The protein belongs to the universal ribosomal protein uL6 family. As to quaternary structure, part of the 50S ribosomal subunit.

In terms of biological role, this protein binds to the 23S rRNA, and is important in its secondary structure. It is located near the subunit interface in the base of the L7/L12 stalk, and near the tRNA binding site of the peptidyltransferase center. The sequence is that of Large ribosomal subunit protein uL6 from Chlamydia trachomatis serovar L2 (strain ATCC VR-902B / DSM 19102 / 434/Bu).